The following is a 265-amino-acid chain: Cell adhesion molecule CEACAM10 (265 aa).

A signal peptide spans 1–33; that stretch reads MELASAHLHKGQVPWVGLLLTASLLTYWSPATT. 2 Ig-like V-type domains span residues 35-142 and 155-262; these read QVTV…HVHP and QVTV…NVHA. N-linked (GlcNAc...) asparagine glycans are attached at residues N44, N87, and N224.

This sequence belongs to the immunoglobulin superfamily. CEA family. As to expression, abundant in seminal vesicle and traces in epididymis and prostate (at protein level). Highly expressed in seminal vesicle, minor in colon and placenta and, to a lesser extent, in small intestine, caecum, stomach, salivary gland and bone marrow.

Its subcellular location is the secreted. It localises to the extracellular space. In terms of biological role, may interact with other CEACAM proteins on the sperm surface. The chain is Cell adhesion molecule CEACAM10 from Mus musculus (Mouse).